The primary structure comprises 279 residues: Oxygen-dependent coproporphyrinogen-III oxidase (279 aa).

Residue Ser-102 coordinates substrate. A divalent metal cation contacts are provided by His-106 and His-116. Catalysis depends on His-116, which acts as the Proton donor. Asn-118 to Arg-120 is a binding site for substrate. Residues His-149 and His-179 each contribute to the a divalent metal cation site. The important for dimerization stretch occupies residues Tyr-244–Asn-279.

This sequence belongs to the aerobic coproporphyrinogen-III oxidase family. As to quaternary structure, homodimer. Requires a divalent metal cation as cofactor.

Its subcellular location is the cytoplasm. The catalysed reaction is coproporphyrinogen III + O2 + 2 H(+) = protoporphyrinogen IX + 2 CO2 + 2 H2O. The protein operates within porphyrin-containing compound metabolism; protoporphyrin-IX biosynthesis; protoporphyrinogen-IX from coproporphyrinogen-III (O2 route): step 1/1. In terms of biological role, involved in the heme biosynthesis. Catalyzes the aerobic oxidative decarboxylation of propionate groups of rings A and B of coproporphyrinogen-III to yield the vinyl groups in protoporphyrinogen-IX. The chain is Oxygen-dependent coproporphyrinogen-III oxidase from Rickettsia africae (strain ESF-5).